The primary structure comprises 128 residues: Otoraplin (128 aa).

The signal sequence occupies residues 1-18 (MARILILLLGGLVVLCAG). 2 disulfide bridges follow: C32–C37 and C55–C127. Residues 39–110 (YTISLARAQE…PSNLVKEQRV (72 aa)) form the SH3 domain.

Belongs to the MIA/OTOR family. In terms of tissue distribution, highly expressed in cochlea.

Its subcellular location is the secreted. This Mus musculus (Mouse) protein is Otoraplin (Otor).